The chain runs to 540 residues: Dynein axonemal assembly factor 3 homolog (540 aa).

Residues Ala-480–Gly-499 form a disordered region.

Belongs to the DNAAF3 family. As to expression, expressed in mechanosensory chordotonal (Ch) neurons, spermatocytes and spermatids (at protein level).

It localises to the cytoplasm. It is found in the dynein axonemal particle. Its function is as follows. Required for the assembly of axonemal inner and outer dynein arms. Involved in the cytoplasmic preassembly of dyneins into complexes before their transport into cilia. Essential for the development of axonemal dynein motors in the sensory cilium of mechanosensory chordotonal (Ch) neurons and sperm flagellum, and consequently, is required for the mechanotransduction process of hearing and sperm mobility. This chain is Dynein axonemal assembly factor 3 homolog, found in Drosophila melanogaster (Fruit fly).